The following is a 189-amino-acid chain: Interleukin-23 subunit alpha (189 aa).

The N-terminal stretch at 1 to 19 (MLGSTAVMLLLLLPWTAQT) is a signal peptide.

The protein belongs to the IL-6 superfamily. In terms of assembly, heterodimer with IL12B; disulfide-linked. The heterodimer is known as interleukin IL-23. Interacts with IL23R; this interaction enables recruitment of IL12RB1.

It is found in the secreted. Functionally, associates with IL12B to form the pro-inflammatory cytokine IL-23 that plays different roles in innate and adaptive immunity. Released by antigen-presenting cells such as dendritic cells or macrophages, binds to a heterodimeric receptor complex composed of IL12RB1 and IL23R to activate JAK2 and TYK2 which then phosphorylate the receptor to form a docking site leading to the phosphorylation of STAT3 and STAT4. This process leads to activation of several pathways including p38 MAPK or NF-kappa-B and promotes the production of pro-inflammatory cytokines such as interleukin-17A/IL17A. In turn, participates in the early and effective intracellular bacterial clearance. Promotes the expansion and survival of T-helper 17 cells, a CD4-positive helper T-cell subset that produces IL-17, as well as other IL-17-producing cells. The polypeptide is Interleukin-23 subunit alpha (IL23A) (Cavia porcellus (Guinea pig)).